A 248-amino-acid chain; its full sequence is MILELDCGNSFIKWRVISPGGRERICAGIVDSDDGLFEALAGSGVKVQRCRLVSVRSDAETEQLVTRLKASLGVEVVCAQSSSQVGGVRNGYHDYQRLGLDRWLALLGGYHLGQRACLVVDLGTAVTADFVSADGEHLGGFICPGLPLMRDQLSTHTRRIRYDREVALAALQELEPGRSTAEAVERGCLLMLRGFVAEQLAQARSRFPGGFEVFLTGGDAELVRDAVPEAQVVPDLVFVGLAIACPLS.

6–13 (DCGNSFIK) is a binding site for ATP. Substrate contacts are provided by residues tyrosine 92 and 99–102 (GLDR). Catalysis depends on aspartate 101, which acts as the Proton acceptor. Aspartate 121 provides a ligand contact to K(+). Threonine 124 is a binding site for ATP. Threonine 180 contacts substrate.

Belongs to the type III pantothenate kinase family. In terms of assembly, homodimer. NH4(+) is required as a cofactor. Requires K(+) as cofactor.

It is found in the cytoplasm. The catalysed reaction is (R)-pantothenate + ATP = (R)-4'-phosphopantothenate + ADP + H(+). It functions in the pathway cofactor biosynthesis; coenzyme A biosynthesis; CoA from (R)-pantothenate: step 1/5. Functionally, catalyzes the phosphorylation of pantothenate (Pan), the first step in CoA biosynthesis. This chain is Type III pantothenate kinase, found in Ectopseudomonas mendocina (strain ymp) (Pseudomonas mendocina).